Consider the following 344-residue polypeptide: tRNA-specific 2-thiouridylase MnmA (344 aa).

ATP is bound by residues 9-16 (AMSGGVDS) and M34. C92 functions as the Nucleophile in the catalytic mechanism. Cysteines 92 and 188 form a disulfide. G116 serves as a coordination point for ATP. The segment at 138–140 (KDQ) is interaction with tRNA. C188 acts as the Cysteine persulfide intermediate in catalysis.

It belongs to the MnmA/TRMU family.

The protein localises to the cytoplasm. It catalyses the reaction S-sulfanyl-L-cysteinyl-[protein] + uridine(34) in tRNA + AH2 + ATP = 2-thiouridine(34) in tRNA + L-cysteinyl-[protein] + A + AMP + diphosphate + H(+). Catalyzes the 2-thiolation of uridine at the wobble position (U34) of tRNA, leading to the formation of s(2)U34. This Desulfotalea psychrophila (strain LSv54 / DSM 12343) protein is tRNA-specific 2-thiouridylase MnmA.